Reading from the N-terminus, the 118-residue chain is D-dopachrome decarboxylase-B (118 aa).

The residue at position 2 (Pro2) is an N-acetylproline.

The protein belongs to the MIF family. In terms of assembly, homotrimer.

The protein localises to the cytoplasm. It catalyses the reaction D-dopachrome + H(+) = 5,6-dihydroxyindole + CO2. Functionally, tautomerization of D-dopachrome with decarboxylation to give 5,6-dihydroxyindole (DHI). The polypeptide is D-dopachrome decarboxylase-B (ddt-b) (Xenopus laevis (African clawed frog)).